A 248-amino-acid polypeptide reads, in one-letter code: Thioesterase FSL2 (248 aa).

Active-site charge relay system residues include Ser-125, Asp-195, and His-223.

It belongs to the LovG family.

It functions in the pathway secondary metabolite biosynthesis. Functionally, thioesterase; part of the gene cluster that mediates the biosynthesis of fusarielins F, G and H, decaketide compounds with 5 methylations and a decaline core that act as mycoestrogens as they stimulate growth of MCF-7 breast cancer cells. The initial compound in the pathway is produced by the reducing polyketide synthase FSL1. FSL1 lacks an active enoyl reductase (ER) domain and biosynthesis of fusarielins relies on the trans-acting enoyl reductase FSL5, before it is released through hydrolysis catalyzed by the thioesterase FSL2. Fusarielins F, G, and H have a C11=C12 cis double bond and is fully reduced between C10 and C11 and between C12 and C13. FSL3 can be involved in the formation of the C11=C12 cis double bond by moving a hypothetical C10=C11 or C12=C13 trans double bond to form prefusarielin. Prefusarielin is oxygenated at C15 and C16 by the cytochrome P450 monooxygenase FSL4, resulting in fusarielin F, which subsequently is epoxidized into fusarielin G by the same enzyme. The final step in the pathway is a reduction of the carboxylic acid moiety to yield fusarielin H via a still undetermined mechanism. The protein is Thioesterase FSL2 of Gibberella zeae (strain ATCC MYA-4620 / CBS 123657 / FGSC 9075 / NRRL 31084 / PH-1) (Wheat head blight fungus).